The primary structure comprises 1120 residues: Putative GTPase-activating protein AN11010 (1120 aa).

One can recognise a Rab-GAP TBC domain in the interval 291-479 (GLPNRLRGEI…RVLDVFFLEG (189 aa)). 5 disordered regions span residues 673–702 (DSPGPSRKQSDSGSFRGLGRPTMNKRPSPA), 859–903 (DEVK…PNNP), 960–979 (AAKQQPTSSGPTVAGASGGI), 1017–1068 (RNAL…ETDR), and 1081–1120 (GKDDVSLLDDKDSHQESSSGQRTAAGSDDKVVSKVVEFES). Positions 864–878 (ESTPSPEGETPGTPS) are enriched in low complexity. Polar residues predominate over residues 960–970 (AAKQQPTSSGP). Acidic residues predominate over residues 1023 to 1032 (DDDDEDDEDD). 2 stretches are compositionally biased toward basic and acidic residues: residues 1057–1068 (DPERRSVRETDR) and 1081–1095 (GKDDVSLLDDKDSHQ).

In Emericella nidulans (strain FGSC A4 / ATCC 38163 / CBS 112.46 / NRRL 194 / M139) (Aspergillus nidulans), this protein is Putative GTPase-activating protein AN11010.